Reading from the N-terminus, the 255-residue chain is Thiazole synthase (255 aa).

Lysine 96 functions as the Schiff-base intermediate with DXP in the catalytic mechanism. 1-deoxy-D-xylulose 5-phosphate contacts are provided by residues glycine 157, 183-184, and 205-206; these read AG and NT.

Belongs to the ThiG family. In terms of assembly, homotetramer. Forms heterodimers with either ThiH or ThiS.

It is found in the cytoplasm. The catalysed reaction is [ThiS sulfur-carrier protein]-C-terminal-Gly-aminoethanethioate + 2-iminoacetate + 1-deoxy-D-xylulose 5-phosphate = [ThiS sulfur-carrier protein]-C-terminal Gly-Gly + 2-[(2R,5Z)-2-carboxy-4-methylthiazol-5(2H)-ylidene]ethyl phosphate + 2 H2O + H(+). Its pathway is cofactor biosynthesis; thiamine diphosphate biosynthesis. Catalyzes the rearrangement of 1-deoxy-D-xylulose 5-phosphate (DXP) to produce the thiazole phosphate moiety of thiamine. Sulfur is provided by the thiocarboxylate moiety of the carrier protein ThiS. In vitro, sulfur can be provided by H(2)S. The polypeptide is Thiazole synthase (Staphylococcus epidermidis (strain ATCC 35984 / DSM 28319 / BCRC 17069 / CCUG 31568 / BM 3577 / RP62A)).